Reading from the N-terminus, the 399-residue chain is Cyclic dehypoxanthine futalosine synthase (399 aa).

The Radical SAM core domain maps to A56–N288. Positions 70, 74, and 77 each coordinate [4Fe-4S] cluster.

This sequence belongs to the radical SAM superfamily. MqnC family. [4Fe-4S] cluster serves as cofactor.

It catalyses the reaction dehypoxanthine futalosine + S-adenosyl-L-methionine = cyclic dehypoxanthinylfutalosinate + 5'-deoxyadenosine + L-methionine + H(+). Its pathway is quinol/quinone metabolism; menaquinone biosynthesis. Radical SAM enzyme that catalyzes the cyclization of dehypoxanthine futalosine (DHFL) into cyclic dehypoxanthine futalosine (CDHFL), a step in the biosynthesis of menaquinone (MK, vitamin K2). This chain is Cyclic dehypoxanthine futalosine synthase, found in Streptomyces coelicolor (strain ATCC BAA-471 / A3(2) / M145).